The following is a 417-amino-acid chain: Serine--tRNA ligase (417 aa).

226–228 is a binding site for L-serine; it reads TSE. ATP is bound by residues 257-259 and Val-273; that span reads RRE. Glu-280 is a binding site for L-serine. Residue 344–347 coordinates ATP; it reads ELTS. Thr-379 contacts L-serine.

This sequence belongs to the class-II aminoacyl-tRNA synthetase family. Type-1 seryl-tRNA synthetase subfamily. As to quaternary structure, homodimer. The tRNA molecule binds across the dimer.

The protein localises to the cytoplasm. It catalyses the reaction tRNA(Ser) + L-serine + ATP = L-seryl-tRNA(Ser) + AMP + diphosphate + H(+). The catalysed reaction is tRNA(Sec) + L-serine + ATP = L-seryl-tRNA(Sec) + AMP + diphosphate + H(+). The protein operates within aminoacyl-tRNA biosynthesis; selenocysteinyl-tRNA(Sec) biosynthesis; L-seryl-tRNA(Sec) from L-serine and tRNA(Sec): step 1/1. Its function is as follows. Catalyzes the attachment of serine to tRNA(Ser). Is also able to aminoacylate tRNA(Sec) with serine, to form the misacylated tRNA L-seryl-tRNA(Sec), which will be further converted into selenocysteinyl-tRNA(Sec). The protein is Serine--tRNA ligase of Mycobacterium sp. (strain JLS).